The primary structure comprises 478 residues: ATP synthase subunit beta (478 aa).

Residue 160–167 participates in ATP binding; that stretch reads GGAGVGKT.

The protein belongs to the ATPase alpha/beta chains family. As to quaternary structure, F-type ATPases have 2 components, CF(1) - the catalytic core - and CF(0) - the membrane proton channel. CF(1) has five subunits: alpha(3), beta(3), gamma(1), delta(1), epsilon(1). CF(0) has three main subunits: a(1), b(2) and c(9-12). The alpha and beta chains form an alternating ring which encloses part of the gamma chain. CF(1) is attached to CF(0) by a central stalk formed by the gamma and epsilon chains, while a peripheral stalk is formed by the delta and b chains.

The protein localises to the cell inner membrane. The catalysed reaction is ATP + H2O + 4 H(+)(in) = ADP + phosphate + 5 H(+)(out). Its function is as follows. Produces ATP from ADP in the presence of a proton gradient across the membrane. The catalytic sites are hosted primarily by the beta subunits. The sequence is that of ATP synthase subunit beta from Orientia tsutsugamushi (strain Ikeda) (Rickettsia tsutsugamushi).